The chain runs to 313 residues: Probable RuBisCO transcriptional regulator (313 aa).

The region spanning 6–63 (FTLDQLLILKAIAAQGSFKKAADSLYISQPAVSMQVQNIEKQLNVQLLDRGGRRANLT) is the HTH lysR-type domain. The segment at residues 23–42 (FKKAADSLYISQPAVSMQVQ) is a DNA-binding region (H-T-H motif).

Belongs to the LysR transcriptional regulatory family.

It localises to the plastid. Its subcellular location is the chloroplast. Functionally, trans-acting transcriptional regulator of RuBisCO genes (rbcL and rbcS) expression. The protein is Probable RuBisCO transcriptional regulator (rbcR) of Chlorokybus atmophyticus (Soil alga).